Consider the following 301-residue polypeptide: Phospholipase A1 VesT1.02 (301 aa).

6 cysteine pairs are disulfide-bonded: Cys-87-Cys-294, Cys-176-Cys-245, Cys-181-Cys-262, Cys-219-Cys-228, Cys-240-Cys-246, and Cys-267-Cys-269. The active-site Nucleophile is the Ser-137. The active-site Charge relay system is Asp-165. His-230 (charge relay system) is an active-site residue.

Belongs to the AB hydrolase superfamily. Lipase family. Is not glycosylated. As to expression, expressed by the venom gland.

The protein localises to the secreted. The enzyme catalyses a 1,2-diacyl-sn-glycero-3-phosphocholine + H2O = a 2-acyl-sn-glycero-3-phosphocholine + a fatty acid + H(+). Functionally, catalyzes the hydrolysis of phosphatidylcholine with phospholipase A1 activity. Shows hemolytic activity. In Vespa tropica (Greater banded hornet), this protein is Phospholipase A1 VesT1.02.